The sequence spans 255 residues: 5-oxoprolinase subunit A (255 aa).

Belongs to the LamB/PxpA family. As to quaternary structure, forms a complex composed of PxpA, PxpB and PxpC.

It catalyses the reaction 5-oxo-L-proline + ATP + 2 H2O = L-glutamate + ADP + phosphate + H(+). Catalyzes the cleavage of 5-oxoproline to form L-glutamate coupled to the hydrolysis of ATP to ADP and inorganic phosphate. The polypeptide is 5-oxoprolinase subunit A (Rhodopseudomonas palustris (strain BisB18)).